Here is a 173-residue protein sequence, read N- to C-terminus: Siroheme decarboxylase alpha subunit (173 aa).

Substrate contacts are provided by His115 and Arg119.

The protein belongs to the Ahb/Nir family. As to quaternary structure, forms a heterodimer composed of AhbA and AhbB.

It carries out the reaction siroheme + 2 H(+) = 12,18-didecarboxysiroheme + 2 CO2. The protein operates within porphyrin-containing compound metabolism; protoheme biosynthesis. In terms of biological role, involved in siroheme-dependent heme b biosynthesis. Catalyzes the decarboxylation of siroheme into didecarboxysiroheme. Siroheme is decarboxylated to monodecarboxysiroheme, which is in turn decarboxylated to didecarboxysiroheme. This is Siroheme decarboxylase alpha subunit from Desulfovibrio desulfuricans (strain ATCC 27774 / DSM 6949 / MB).